Reading from the N-terminus, the 172-residue chain is C-phycocyanin beta chain (172 aa).

Residues N35, D39, N72, R77, C82, 82 to 88 (CLRDMEI), 149 to 151 (TTG), and C153 each bind (2R,3E)-phycocyanobilin. Position 72 is an N4-methylasparagine (N72).

The protein belongs to the phycobiliprotein family. As to quaternary structure, heterodimer of an alpha and a beta subunit. Dimers further assemble into trimers and the trimers into hexamers. The basic functional unit of phycobiliproteins is a ring-shaped hexamer formed from two back-to-back trimers contacting via the alpha chain subunits. The trimers are composed of alpha/beta subunit heterodimers arranged around a three-fold axis of symmetry. The phycoerythrins also contain a gamma subunit which is located in the center of the hexamer. In terms of processing, contains two covalently linked phycocyanobilin chromophores.

It is found in the plastid. Its subcellular location is the chloroplast thylakoid membrane. Its function is as follows. Light-harvesting photosynthetic tetrapyrrole chromophore-protein from the phycobiliprotein complex (phycobilisome, PBS). Phycocyanin is the major phycobiliprotein in the PBS rod. This is C-phycocyanin beta chain (cpcB) from Galdieria sulphuraria (Red alga).